A 310-amino-acid polypeptide reads, in one-letter code: ADP-L-glycero-D-manno-heptose-6-epimerase (310 aa).

Residues 10–11, 31–32, lysine 38, lysine 53, 75–79, and asparagine 92 each bind NADP(+); these read FI, DN, and EGACS. Tyrosine 140 serves as the catalytic Proton acceptor. Position 144 (lysine 144) interacts with NADP(+). Position 169 (asparagine 169) interacts with substrate. NADP(+) contacts are provided by valine 170 and lysine 178. The active-site Proton acceptor is lysine 178. Residues serine 180, histidine 187, 201–204, and arginine 209 contribute to the substrate site; that span reads FEGS. The residue at position 267 (lysine 267) is an N6-acetyllysine. Residue tyrosine 272 coordinates substrate.

Belongs to the NAD(P)-dependent epimerase/dehydratase family. HldD subfamily. As to quaternary structure, homopentamer. It depends on NADP(+) as a cofactor.

The enzyme catalyses ADP-D-glycero-beta-D-manno-heptose = ADP-L-glycero-beta-D-manno-heptose. It participates in nucleotide-sugar biosynthesis; ADP-L-glycero-beta-D-manno-heptose biosynthesis; ADP-L-glycero-beta-D-manno-heptose from D-glycero-beta-D-manno-heptose 7-phosphate: step 4/4. Catalyzes the interconversion between ADP-D-glycero-beta-D-manno-heptose and ADP-L-glycero-beta-D-manno-heptose via an epimerization at carbon 6 of the heptose. The chain is ADP-L-glycero-D-manno-heptose-6-epimerase from Shigella boydii serotype 18 (strain CDC 3083-94 / BS512).